The sequence spans 451 residues: Phosphoglucosamine mutase (451 aa).

Residue Ser102 is the Phosphoserine intermediate of the active site. Ser102, Asp242, Asp244, and Asp246 together coordinate Mg(2+). Ser102 is subject to Phosphoserine.

Belongs to the phosphohexose mutase family. Mg(2+) is required as a cofactor. In terms of processing, activated by phosphorylation.

The catalysed reaction is alpha-D-glucosamine 1-phosphate = D-glucosamine 6-phosphate. Catalyzes the conversion of glucosamine-6-phosphate to glucosamine-1-phosphate. The polypeptide is Phosphoglucosamine mutase (Staphylococcus epidermidis (strain ATCC 35984 / DSM 28319 / BCRC 17069 / CCUG 31568 / BM 3577 / RP62A)).